A 74-amino-acid polypeptide reads, in one-letter code: Kappa-stichotoxin-Hmg1a (74 aa).

Residues 1-22 (MKSQMIAAVLLIAFCLCVVVTA) form the signal peptide. A propeptide spanning residues 23–39 (RMELQDVEDMENGFQKR) is cleaved from the precursor. A ShKT domain is found at 42-74 (CKDLIPVSECTDIRCRTSMKYRLNLCRKTCGSC). Disulfide bonds link cysteine 42-cysteine 74, cysteine 51-cysteine 67, and cysteine 56-cysteine 71.

This sequence belongs to the sea anemone type 1 potassium channel toxin family. Type 1a subfamily.

The protein localises to the secreted. The protein resides in the nematocyst. Potently blocks the voltage-gated potassium channel Kv1.1/KCNA1 (Ki=75 pM), KcsA (Ki~1 nM) and moderately blocks Kv1.2/KCNA2 (Ki=2.5 nM) and Kv1.3/KCNA3 (Ki=3.1 nM). Also facilitates acetylcholine release at the avian neuromuscular junction. Blockade and dissociation rate are sensitive to voltage. This Heteractis magnifica (Magnificent sea anemone) protein is Kappa-stichotoxin-Hmg1a.